The following is a 303-amino-acid chain: Ubiquinone biosynthesis protein COQ4, mitochondrial (303 aa).

Residues His-191, Asp-192, His-195, and Glu-207 each contribute to the Zn(2+) site.

This sequence belongs to the COQ4 family. Component of a multi-subunit COQ enzyme complex, composed of at least COQ3, COQ4, COQ5, COQ6, COQ7 and COQ9. Zn(2+) serves as cofactor.

The protein resides in the mitochondrion inner membrane. The catalysed reaction is a 4-hydroxy-3-methoxy-5-(all-trans-polyprenyl)benzoate + H(+) = a 2-methoxy-6-(all-trans-polyprenyl)phenol + CO2. Its pathway is cofactor biosynthesis; ubiquinone biosynthesis. In terms of biological role, lyase that catalyzes the C1-decarboxylation of 4-hydroxy-3-methoxy-5-(all-trans-polyprenyl)benzoic acid into 2-methoxy-6-(all-trans-polyprenyl)phenol during ubiquinone biosynthesis. This is Ubiquinone biosynthesis protein COQ4, mitochondrial from Komagataella phaffii (strain GS115 / ATCC 20864) (Yeast).